The chain runs to 430 residues: Rosmarinate synthase (430 aa).

Residue H152 is the Proton acceptor of the active site. The interval 178–210 is disordered; that stretch reads TPLPHFDRSSLSARNPPQPQFSHAEYQPPPTLE. Residue D377 is the Proton acceptor of the active site.

It belongs to the plant acyltransferase family.

The catalysed reaction is (2R)-3-(3,4-dihydroxyphenyl)lactate + (E)-caffeoyl-CoA = (R)-rosmarinate + CoA. In terms of biological role, involved in the biosynthesis of rosmarinic acid, a compound with antiviral, antimicrobial and anti-inflammatory activities. Can use 4-coumaroyl- and caffeoyl-CoA as hydroxycinnamoyl donors and 4-Hydroxyphenyllactate and 3.4-Dihydroxyphenyllactate, but not shikimate or quinate, as hydroxycinnamoyl acceptors. Can also putatively catalyze amide formation with D-amino acids as acceptors. The chain is Rosmarinate synthase (RAS) from Plectranthus scutellarioides (Coleus).